Consider the following 360-residue polypeptide: Amine dehydrogenase (360 aa).

The protein belongs to the amine dehydrogenase family. As to quaternary structure, homodimer.

The catalysed reaction is a secondary alkyl amine + NAD(+) + H2O = a ketone + NH4(+) + NADH + H(+). The enzyme catalyses a secondary alkyl amine + NADP(+) + H2O = a ketone + NH4(+) + NADPH + H(+). It catalyses the reaction serinol + NAD(+) + H2O = dihydroxyacetone + NH4(+) + NADH + H(+). It carries out the reaction serinol + NADP(+) + H2O = dihydroxyacetone + NH4(+) + NADPH + H(+). The catalysed reaction is 2-aminopropan-1-ol + NAD(+) + H2O = hydroxyacetone + NH4(+) + NADH + H(+). The enzyme catalyses (R)-1-phenylethylamine + NAD(+) + H2O = acetophenone + NH4(+) + NADH + H(+). It catalyses the reaction (S)-1-phenylethylamine + NAD(+) + H2O = acetophenone + NH4(+) + NADH + H(+). It carries out the reaction (2S)-2-aminobutan-1-ol + NAD(+) + H2O = 1-hydroxy-2-butanone + NH4(+) + NADH + H(+). The catalysed reaction is (2S)-2-amino-3-methylbutan-1-ol + NAD(+) + H2O = 1-hydroxy-3-methylbutan-2-one + NH4(+) + NADH + H(+). The enzyme catalyses 2-aminopentan-1-ol + NAD(+) + H2O = 1-hydroxypentan-2-one + NH4(+) + NADH + H(+). It catalyses the reaction (S)-leucinol + NAD(+) + H2O = 1-hydroxy-4-methylpentan-2-one + NH4(+) + NADH + H(+). It carries out the reaction (S)-isoleucinol + NAD(+) + H2O = (3S)-1-hydroxy-3-methylpentan-2-one + NH4(+) + NADH + H(+). The catalysed reaction is (S)-methioninol + NAD(+) + H2O = 1-hydroxy-4-(methythio)butan-2-one + NH4(+) + NADH + H(+). The enzyme catalyses 2-aminocyclohexanol + NAD(+) + H2O = 2-hydroxycyclohexan-1-one + NH4(+) + NADH + H(+). It catalyses the reaction L-alanine + NAD(+) + H2O = pyruvate + NH4(+) + NADH + H(+). It carries out the reaction D-alanine + NAD(+) + H2O = pyruvate + NH4(+) + NADH + H(+). The catalysed reaction is L-aspartate + NAD(+) + H2O = oxaloacetate + NH4(+) + NADH + H(+). The enzyme catalyses D-aspartate + NAD(+) + H2O = oxaloacetate + NH4(+) + NADH + H(+). It catalyses the reaction L-glutamate + NAD(+) + H2O = 2-oxoglutarate + NH4(+) + NADH + H(+). It carries out the reaction D-glutamate + NAD(+) + H2O = 2-oxoglutarate + NH4(+) + NADH + H(+). The catalysed reaction is L-serine + NAD(+) + H2O = 3-hydroxypyruvate + NH4(+) + NADH + H(+). The enzyme catalyses D-serine + NAD(+) + H2O = 3-hydroxypyruvate + NH4(+) + NADH + H(+). It catalyses the reaction methylamine + NAD(+) + H2O = formaldehyde + NH4(+) + NADH + H(+). It carries out the reaction ethylamine + NAD(+) + H2O = acetaldehyde + NH4(+) + NADH + H(+). The catalysed reaction is propylamine + NAD(+) + H2O = propanal + NH4(+) + NADH + H(+). The enzyme catalyses butylamine + NAD(+) + H2O = butanal + NH4(+) + NADH + H(+). It catalyses the reaction hexylamine + NAD(+) + H2O = hexanal + NH4(+) + NADH + H(+). It carries out the reaction octylamine + NAD(+) + H2O = octanal + NH4(+) + NADH + H(+). The catalysed reaction is (R)-sec-butylamine + NAD(+) + H2O = butan-2-one + NH4(+) + NADH + H(+). The enzyme catalyses (S)-sec-butylamine + NAD(+) + H2O = butan-2-one + NH4(+) + NADH + H(+). It catalyses the reaction 2-aminopentane + NAD(+) + H2O = pentan-2-one + NH4(+) + NADH + H(+). It carries out the reaction 3-aminopentane + NAD(+) + H2O = pentan-3-one + NH4(+) + NADH + H(+). The catalysed reaction is (2R)-heptan-2-amine + NAD(+) + H2O = heptan-2-one + NH4(+) + NADH + H(+). The enzyme catalyses (2S)-heptan-2-amine + NAD(+) + H2O = heptan-2-one + NH4(+) + NADH + H(+). It catalyses the reaction benzylamine + NAD(+) + H2O = benzaldehyde + NH4(+) + NADH + H(+). It carries out the reaction 3-aminobutan-2-ol + NAD(+) + H2O = acetoin + NH4(+) + NADH + H(+). The catalysed reaction is 3-aminobutan-1-ol + NAD(+) + H2O = 4-hydroxybutan-2-one + NH4(+) + NADH + H(+). The enzyme catalyses 5-hydroxypentan-2-amine + NAD(+) + H2O = 5-hydroxypentan-2-one + NH4(+) + NADH + H(+). It catalyses the reaction 4-hydroxyhexan-3-amine + NAD(+) + H2O = 4-hydroxyhexan-3-one + NH4(+) + NADH + H(+). It carries out the reaction 5-hydroxyoctan-4-amine + NAD(+) + H2O = 5-hydroxyoctan-4-one + NH4(+) + NADH + H(+). The catalysed reaction is 2-hydroxy-1-phenylethan-1-amine + NAD(+) + H2O = 2-hydroxyacetophenone + NH4(+) + NADH + H(+). The enzyme catalyses hexan-2-amine + NAD(+) + H2O = hexan-2-one + NH4(+) + NADH + H(+). It catalyses the reaction 4-phenylbutan-2-amine + NAD(+) + H2O = 4-phenylbutan-2-one + NH4(+) + NADH + H(+). Functionally, catalyzes the reversible oxidative deaminations of a broad range of amines, amino alcohols and amino acids. Catalyzes the reversible dehydrogenation of serinol in the presence of NAD(+) to give dihydroxyacetone, ammonium ion and NADH, while NADP(+) shows a slight activity. Is also able to produce 2-amino-1-propanol and aspartate by the reductive amination of the corresponding keto alcohol (hydroxyacetone) and keto acid (oxaloacetate) in the presence of ammonium ions and NADH, and that of acetophenone from phenylethylamine by the oxidative deamination in the presence of NAD(+). The protein is Amine dehydrogenase of Streptomyces virginiae (Streptomyces cinnamonensis).